The sequence spans 122 residues: Large ribosomal subunit protein uL18 (122 aa).

This sequence belongs to the universal ribosomal protein uL18 family. In terms of assembly, part of the 50S ribosomal subunit; part of the 5S rRNA/L5/L18/L25 subcomplex. Contacts the 5S and 23S rRNAs.

This is one of the proteins that bind and probably mediate the attachment of the 5S RNA into the large ribosomal subunit, where it forms part of the central protuberance. In Desulforamulus reducens (strain ATCC BAA-1160 / DSM 100696 / MI-1) (Desulfotomaculum reducens), this protein is Large ribosomal subunit protein uL18.